The following is a 262-amino-acid chain: Ribosome-recycling factor, mitochondrial (262 aa).

Residues 1 to 55 (MALGLRCFRLVHPAFCNSLAALTRPVSEVTLQTVRGRQNDHGQCMAYAAVPVRHF) constitute a mitochondrion transit peptide.

The protein belongs to the RRF family.

It is found in the mitochondrion. Its function is as follows. Responsible for the disassembly of ribosomes from messenger RNA at the termination of mitochondrial protein biosynthesis. Acts in collaboration with GFM2. Promotes mitochondrial ribosome recycling by dissolution of intersubunit contacts. This Bos taurus (Bovine) protein is Ribosome-recycling factor, mitochondrial (MRRF).